Consider the following 203-residue polypeptide: Putative zinc finger protein 876 (203 aa).

4 C2H2-type zinc fingers span residues 63–85 (YTCE…KNIH), 91–113 (YKCE…KRIH), 119–141 (YKCE…KKIH), and 147–169 (YKCK…TNIH). The C2H2-type 5; degenerate zinc finger occupies 175–197 (YTCEECGKDFTWSSTLTVHQRIQ).

This sequence belongs to the krueppel C2H2-type zinc-finger protein family.

It is found in the nucleus. May be involved in transcriptional regulation. The sequence is that of Putative zinc finger protein 876 (ZNF876P) from Homo sapiens (Human).